Reading from the N-terminus, the 318-residue chain is Olfactory receptor 13C5 (318 aa).

Residues 1–25 are Extracellular-facing; that stretch reads MEWENHTILVEFFLKGLSGHPRLEL. Asn5 is a glycosylation site (N-linked (GlcNAc...) asparagine). Residues 26-46 form a helical membrane-spanning segment; it reads LFFVLIFIMYVVILLGNGTLI. At 47–54 the chain is on the cytoplasmic side; it reads LISILDPH. The chain crosses the membrane as a helical span at residues 55-75; that stretch reads LHTPMYFFLGNLSFLDICYTT. Residues 76–99 lie on the Extracellular side of the membrane; that stretch reads TSIPSTLVSFLSERKTISLSGCAV. The cysteines at positions 97 and 189 are disulfide-linked. A helical transmembrane segment spans residues 100–120; sequence QMFLSLAMGTTECVLLGVMAF. Over 121–139 the chain is Cytoplasmic; that stretch reads DRYVAICNPLRYPIIMSKD. Residues 140 to 160 form a helical membrane-spanning segment; that stretch reads AYVPMAAGSWIIGAVNSAVQT. Residues 161 to 197 are Extracellular-facing; sequence VFVVQLPFCRNNIINHFTCEILAVMKLACADISGNEF. A helical transmembrane segment spans residues 198-217; it reads ILLVTTTLFLLTPLLLIIVS. The Cytoplasmic segment spans residues 218–237; the sequence is YTLIILSIFKISSSEGRSKP. The helical transmembrane segment at 238 to 258 threads the bilayer; sequence SSTCSARLTVVITFCGTIFLM. The Extracellular segment spans residues 259–277; the sequence is YMKPKSQETLNSDDLDATD. The chain crosses the membrane as a helical span at residues 278 to 298; it reads KLIFIFYRVMTPMMNPLIYSL. The Cytoplasmic portion of the chain corresponds to 299–318; that stretch reads RNKDVKEAVKHLLRRKNFNK.

Belongs to the G-protein coupled receptor 1 family.

It localises to the cell membrane. Functionally, odorant receptor. The protein is Olfactory receptor 13C5 (OR13C5) of Homo sapiens (Human).